Here is a 516-residue protein sequence, read N- to C-terminus: uncharacterized protein (516 aa).

It to H.influenzae HI_0521.

This is an uncharacterized protein from Escherichia coli (strain K12).